Reading from the N-terminus, the 136-residue chain is Type II nicking enzyme V.XorIIP (136 aa).

This sequence belongs to the Vsr family.

Its function is as follows. May nick XorII sequences that contain T/G mispairs resulting from m5C-deamination. If unrepaired, these mismatches can lead to C-to-T transition mutations. The very short patch (VSP) repair process counteracts the mutagenic process by repairing the mismatches in favor of the G-containing strand. This enzyme is an endonuclease that nicks double-stranded DNA within the sequence CGATCG (C-methylation site unknown) next to the thymidine residue that is mismatched to 2'-deoxyguanosine. The incision is mismatch-dependent and strand-specific. The chain is Type II nicking enzyme V.XorIIP from Xanthomonas oryzae pv. oryzae (strain KACC10331 / KXO85).